We begin with the raw amino-acid sequence, 293 residues long: Ribosomal protein L11 methyltransferase (293 aa).

S-adenosyl-L-methionine is bound by residues Thr-145, Gly-166, Asp-188, and Asn-230.

Belongs to the methyltransferase superfamily. PrmA family.

Its subcellular location is the cytoplasm. The enzyme catalyses L-lysyl-[protein] + 3 S-adenosyl-L-methionine = N(6),N(6),N(6)-trimethyl-L-lysyl-[protein] + 3 S-adenosyl-L-homocysteine + 3 H(+). Methylates ribosomal protein L11. The sequence is that of Ribosomal protein L11 methyltransferase from Shewanella baltica (strain OS195).